A 312-amino-acid polypeptide reads, in one-letter code: tRNA dimethylallyltransferase (312 aa).

Position 15-22 (15-22 (GPTAAGKS)) interacts with ATP. 17-22 (TAAGKS) contributes to the substrate binding site. Residues 40–43 (DSMQ) are interaction with substrate tRNA.

It belongs to the IPP transferase family. As to quaternary structure, monomer. Mg(2+) is required as a cofactor.

It catalyses the reaction adenosine(37) in tRNA + dimethylallyl diphosphate = N(6)-dimethylallyladenosine(37) in tRNA + diphosphate. Its function is as follows. Catalyzes the transfer of a dimethylallyl group onto the adenine at position 37 in tRNAs that read codons beginning with uridine, leading to the formation of N6-(dimethylallyl)adenosine (i(6)A). The protein is tRNA dimethylallyltransferase of Streptomyces griseus subsp. griseus (strain JCM 4626 / CBS 651.72 / NBRC 13350 / KCC S-0626 / ISP 5235).